Consider the following 476-residue polypeptide: Deoxyguanosinetriphosphate triphosphohydrolase-like protein 2 (476 aa).

The interval 1–20 (MYTDADRSREVVPEKDGHDK) is disordered. Residues 60-233 (RLTHSLEVAQ…MDLADDIAYS (174 aa)) enclose the HD domain.

This sequence belongs to the dGTPase family. Type 2 subfamily.

The chain is Deoxyguanosinetriphosphate triphosphohydrolase-like protein 2 from Mesorhizobium japonicum (strain LMG 29417 / CECT 9101 / MAFF 303099) (Mesorhizobium loti (strain MAFF 303099)).